The sequence spans 312 residues: Putative pyridoxal kinase BUD16 (312 aa).

3 residues coordinate substrate: Ser-9, Thr-44, and Tyr-122. Residues Thr-183 to Ser-184 and Arg-211 to Gly-223 each bind ATP. Position 224 (Asp-224) interacts with substrate.

Belongs to the pyridoxine kinase family. It depends on a divalent metal cation as a cofactor.

The protein resides in the cytoplasm. The protein localises to the nucleus. The enzyme catalyses pyridoxal + ATP = pyridoxal 5'-phosphate + ADP + H(+). In terms of biological role, required for synthesis of pyridoxal-5-phosphate from vitamin B6. Important for bud site selection. This chain is Putative pyridoxal kinase BUD16 (BUD16), found in Saccharomyces cerevisiae (strain ATCC 204508 / S288c) (Baker's yeast).